The sequence spans 473 residues: UDP-N-acetylmuramate--L-alanine ligase (473 aa).

Residue 115 to 121 (GTHGKTT) participates in ATP binding.

Belongs to the MurCDEF family.

The protein resides in the cytoplasm. It catalyses the reaction UDP-N-acetyl-alpha-D-muramate + L-alanine + ATP = UDP-N-acetyl-alpha-D-muramoyl-L-alanine + ADP + phosphate + H(+). Its pathway is cell wall biogenesis; peptidoglycan biosynthesis. Its function is as follows. Cell wall formation. The polypeptide is UDP-N-acetylmuramate--L-alanine ligase (Rhizorhabdus wittichii (strain DSM 6014 / CCUG 31198 / JCM 15750 / NBRC 105917 / EY 4224 / RW1) (Sphingomonas wittichii)).